We begin with the raw amino-acid sequence, 352 residues long: Gap junction alpha-4 protein (352 aa).

At 2-23 (GDWEFLEKLLDQVQEHSTSIGK) the chain is on the cytoplasmic side. A helical membrane pass occupies residues 24 to 46 (IWLMVLFIFRILILGLAGESVWG). At 47–76 (DEQSDFICNTEQPGCTNVCYDKAFPISHVR) the chain is on the extracellular side. A helical membrane pass occupies residues 77 to 99 (YWVLQFLFVSTPTLFYLGHVIYL). The Cytoplasmic portion of the chain corresponds to 100 to 153 (SRREEKLKQKESELRALDDKEQVEQAIAIIEKKKMKLYIQEDGTVKIKGALMCT). A helical transmembrane segment spans residues 154-176 (YLTSVIFKSLFEAGFLLGQWYLY). Residues 177–208 (GFVMTPIYVCERVPCPHKVDCFVSRPMEKTIF) lie on the Extracellular side of the membrane. The helical transmembrane segment at 209-231 (IVFMLVVSLISLFLNVLELIHLV) threads the bilayer. Residues 232-352 (CKSMIDTLKK…SSSASKKQYV (121 aa)) lie on the Cytoplasmic side of the membrane. The tract at residues 330 to 352 (KTHSTMEKPSTRASSSASKKQYV) is disordered. Polar residues predominate over residues 340–352 (TRASSSASKKQYV).

Belongs to the connexin family. Alpha-type (group II) subfamily. In terms of assembly, a connexon is composed of a hexamer of connexins.

It localises to the cell membrane. Its subcellular location is the cell junction. The protein resides in the gap junction. In terms of biological role, one gap junction consists of a cluster of closely packed pairs of transmembrane channels, the connexons, through which materials of low MW diffuse from one cell to a neighboring cell. The sequence is that of Gap junction alpha-4 protein (gja4) from Xenopus tropicalis (Western clawed frog).